The sequence spans 196 residues: HTH-type transcriptional regulator Hpr (196 aa).

The region spanning 13–157 is the HTH marR-type domain; it reads SIVFSHKMAL…LICIVRHIYG (145 aa). A DNA-binding region (H-T-H motif) is located at residues 63 to 86; that stretch reads ISDIASHGVMHVSTAFNFSKKLEA.

In terms of assembly, homodimer.

Negative regulator of protease production and sporulation. The polypeptide is HTH-type transcriptional regulator Hpr (Shouchella clausii (strain KSM-K16) (Alkalihalobacillus clausii)).